Consider the following 195-residue polypeptide: Putative manganese efflux pump MntP (195 aa).

6 helical membrane passes run 3-23, 40-60, 68-88, 106-126, 132-152, and 165-185; these read LSATLILAFGMSMDAFAASVG, GLIFGVIEAITPLIGWGLGLL, WDHWVAFTLLAFLGGRMVLAG, VLIATAIATSLDALAIGVGLA, ILHAALLIGLATLIMSTIGML, and AEIIGGLILIGIGCNILYSHI.

It belongs to the MntP (TC 9.B.29) family.

The protein localises to the cell inner membrane. In terms of biological role, probably functions as a manganese efflux pump. The protein is Putative manganese efflux pump MntP of Sodalis glossinidius (strain morsitans).